A 402-amino-acid polypeptide reads, in one-letter code: Serine/threonine transporter SstT (402 aa).

8 helical membrane passes run isoleucine 17–isoleucine 37, phenylalanine 44–leucine 64, isoleucine 78–tyrosine 98, alanine 138–methionine 158, isoleucine 179–isoleucine 199, valine 212–isoleucine 232, methionine 295–isoleucine 315, and alanine 336–isoleucine 356.

Belongs to the dicarboxylate/amino acid:cation symporter (DAACS) (TC 2.A.23) family.

The protein resides in the cell membrane. The catalysed reaction is L-serine(in) + Na(+)(in) = L-serine(out) + Na(+)(out). The enzyme catalyses L-threonine(in) + Na(+)(in) = L-threonine(out) + Na(+)(out). Involved in the import of serine and threonine into the cell, with the concomitant import of sodium (symport system). The sequence is that of Serine/threonine transporter SstT from Streptococcus thermophilus (strain ATCC BAA-250 / LMG 18311).